The primary structure comprises 507 residues: Steroid 17-alpha-hydroxylase/17,20 lyase (507 aa).

Cys-441 is a binding site for heme.

Belongs to the cytochrome P450 family. Heme serves as cofactor.

It localises to the endoplasmic reticulum membrane. It is found in the microsome membrane. The catalysed reaction is a C21-steroid + reduced [NADPH--hemoprotein reductase] + O2 = a 17alpha-hydroxy-C21-steroid + oxidized [NADPH--hemoprotein reductase] + H2O + H(+). It catalyses the reaction progesterone + reduced [NADPH--hemoprotein reductase] + O2 = 17alpha-hydroxyprogesterone + oxidized [NADPH--hemoprotein reductase] + H2O + H(+). It carries out the reaction pregnenolone + reduced [NADPH--hemoprotein reductase] + O2 = 17alpha-hydroxypregnenolone + oxidized [NADPH--hemoprotein reductase] + H2O + H(+). The enzyme catalyses 17alpha-hydroxyprogesterone + reduced [NADPH--hemoprotein reductase] + O2 = androst-4-ene-3,17-dione + acetate + oxidized [NADPH--hemoprotein reductase] + H2O + 2 H(+). The catalysed reaction is 17alpha-hydroxyprogesterone + reduced [NADPH--hemoprotein reductase] + O2 = 16alpha,17alpha-dihydroxyprogesterone + oxidized [NADPH--hemoprotein reductase] + H2O + H(+). It catalyses the reaction 16alpha,17alpha-dihydroxyprogesterone + reduced [NADPH--hemoprotein reductase] + O2 = 6beta,16alpha,17alpha-trihydroxyprogesterone + oxidized [NADPH--hemoprotein reductase] + H2O + H(+). It carries out the reaction 17alpha-hydroxypregnenolone + reduced [NADPH--hemoprotein reductase] + O2 = 3beta-hydroxyandrost-5-en-17-one + acetate + oxidized [NADPH--hemoprotein reductase] + H2O + 2 H(+). The enzyme catalyses 16alpha,17alpha-dihydroxypregnenolone + reduced [NADPH--hemoprotein reductase] + O2 = 3beta,16alpha-dihydroxy-androst-5-en-17-one + acetate + oxidized [NADPH--hemoprotein reductase] + H2O + 2 H(+). The catalysed reaction is 3beta-hydroxyandrost-5-en-17-one + reduced [NADPH--hemoprotein reductase] + O2 = 3beta,16alpha-dihydroxy-androst-5-en-17-one + oxidized [NADPH--hemoprotein reductase] + H2O + H(+). It catalyses the reaction androst-4-ene-3,17-dione + reduced [NADPH--hemoprotein reductase] + O2 = 16alpha-hydroxyandrost-4-ene-3,17-dione + oxidized [NADPH--hemoprotein reductase] + H2O + H(+). It functions in the pathway steroid hormone biosynthesis. It participates in steroid biosynthesis; glucocorticoid biosynthesis. With respect to regulation, regulated predominantly by intracellular cAMP levels. The 17,20-lyase activity is stimulated by cytochrome b5, which acts as an allosteric effector increasing the Vmax of the lyase activity. In terms of biological role, a cytochrome P450 monooxygenase involved in corticoid and androgen biosynthesis. Catalyzes 17-alpha hydroxylation of C21 steroids, which is common for both pathways. A second oxidative step, required only for androgen synthesis, involves an acyl-carbon cleavage. The 17-alpha hydroxy intermediates, as part of adrenal glucocorticoids biosynthesis pathway, are precursors of cortisol. Hydroxylates steroid hormones, pregnenolone and progesterone to form 17-alpha hydroxy metabolites, followed by the cleavage of the C17-C20 bond to form C19 steroids, dehydroepiandrosterone (DHEA) and androstenedione. Has 16-alpha hydroxylase activity. Catalyzes 16-alpha hydroxylation of 17-alpha hydroxy pregnenolone, followed by the cleavage of the C17-C20 bond to form 16-alpha-hydroxy DHEA. Also 16-alpha hydroxylates androgens, relevant for estriol synthesis. Mechanistically, uses molecular oxygen inserting one oxygen atom into a substrate, and reducing the second into a water molecule, with two electrons provided by NADPH via cytochrome P450 reductase (CPR; NADPH-ferrihemoprotein reductase). This Rattus norvegicus (Rat) protein is Steroid 17-alpha-hydroxylase/17,20 lyase (Cyp17a1).